Reading from the N-terminus, the 312-residue chain is HPr kinase/phosphorylase (312 aa).

Residues His139 and Lys160 contribute to the active site. Residue 154-161 participates in ATP binding; the sequence is GSSGVGKS. Ser161 provides a ligand contact to Mg(2+). Asp178 acts as the Proton acceptor; for phosphorylation activity. Proton donor; for dephosphorylation activity in catalysis. The important for the catalytic mechanism of both phosphorylation and dephosphorylation stretch occupies residues 202–211; sequence LEIRGLGIIN. Glu203 contacts Mg(2+). Residue Arg244 is part of the active site. An important for the catalytic mechanism of dephosphorylation region spans residues 265–270; it reads PVRPGR.

The protein belongs to the HPrK/P family. Homohexamer. It depends on Mg(2+) as a cofactor.

The enzyme catalyses [HPr protein]-L-serine + ATP = [HPr protein]-O-phospho-L-serine + ADP + H(+). It carries out the reaction [HPr protein]-O-phospho-L-serine + phosphate + H(+) = [HPr protein]-L-serine + diphosphate. Its function is as follows. Catalyzes the ATP- as well as the pyrophosphate-dependent phosphorylation of a specific serine residue in HPr, a phosphocarrier protein of the phosphoenolpyruvate-dependent sugar phosphotransferase system (PTS). HprK/P also catalyzes the pyrophosphate-producing, inorganic phosphate-dependent dephosphorylation (phosphorolysis) of seryl-phosphorylated HPr (P-Ser-HPr). The two antagonistic activities of HprK/P are regulated by several intracellular metabolites, which change their concentration in response to the absence or presence of rapidly metabolisable carbon sources (glucose, fructose, etc.) in the growth medium. Therefore, by controlling the phosphorylation state of HPr, HPrK/P is a sensor enzyme that plays a major role in the regulation of carbon metabolism and sugar transport: it mediates carbon catabolite repression (CCR), and regulates PTS-catalyzed carbohydrate uptake and inducer exclusion. The chain is HPr kinase/phosphorylase from Listeria innocua serovar 6a (strain ATCC BAA-680 / CLIP 11262).